We begin with the raw amino-acid sequence, 189 residues long: Peptidyl-tRNA hydrolase (189 aa).

Tyr-15 serves as a coordination point for tRNA. His-20 (proton acceptor) is an active-site residue. TRNA-binding residues include Phe-66, Asn-68, and Asn-114.

Belongs to the PTH family. Monomer.

The protein resides in the cytoplasm. The catalysed reaction is an N-acyl-L-alpha-aminoacyl-tRNA + H2O = an N-acyl-L-amino acid + a tRNA + H(+). Its function is as follows. Hydrolyzes ribosome-free peptidyl-tRNAs (with 1 or more amino acids incorporated), which drop off the ribosome during protein synthesis, or as a result of ribosome stalling. Functionally, catalyzes the release of premature peptidyl moieties from peptidyl-tRNA molecules trapped in stalled 50S ribosomal subunits, and thus maintains levels of free tRNAs and 50S ribosomes. This is Peptidyl-tRNA hydrolase from Streptococcus gordonii (strain Challis / ATCC 35105 / BCRC 15272 / CH1 / DL1 / V288).